Reading from the N-terminus, the 313-residue chain is Malate dehydrogenase (313 aa).

NAD(+) contacts are provided by residues 11-16 (GAGSIG) and Asp35. Arg84 and Arg90 together coordinate substrate. Residues Asn97 and 120 to 122 (VTN) each bind NAD(+). 2 residues coordinate substrate: Asn122 and Arg153. The Proton acceptor role is filled by His177.

Belongs to the LDH/MDH superfamily. MDH type 3 family.

It carries out the reaction (S)-malate + NAD(+) = oxaloacetate + NADH + H(+). In terms of biological role, catalyzes the reversible oxidation of malate to oxaloacetate. This Ehrlichia chaffeensis (strain ATCC CRL-10679 / Arkansas) protein is Malate dehydrogenase.